Consider the following 623-residue polypeptide: Glutathione import ATP-binding protein GsiA (623 aa).

ABC transporter domains lie at 15 to 269 and 325 to 564; these read VSGL…QTLL and LRSG…RKLM. ATP contacts are provided by residues 49 to 56 and 357 to 364; these read GESGSGKS.

This sequence belongs to the ABC transporter superfamily. Glutathione importer (TC 3.A.1.5.11) family. The complex is composed of two ATP-binding proteins (GsiA), two transmembrane proteins (GsiC and GsiD) and a solute-binding protein (GsiB).

The protein localises to the cell inner membrane. The enzyme catalyses glutathione(out) + ATP + H2O = glutathione(in) + ADP + phosphate + H(+). Part of the ABC transporter complex GsiABCD involved in glutathione import. Responsible for energy coupling to the transport system. The protein is Glutathione import ATP-binding protein GsiA of Salmonella choleraesuis (strain SC-B67).